Reading from the N-terminus, the 244-residue chain is Probable cytokinin riboside 5'-monophosphate phosphoribohydrolase LOGL2 (244 aa).

Substrate-binding positions include E91, R109 to K110, and G126 to E132.

Belongs to the LOG family.

The catalysed reaction is N(6)-(dimethylallyl)adenosine 5'-phosphate + H2O = N(6)-dimethylallyladenine + D-ribose 5-phosphate. It carries out the reaction 9-ribosyl-trans-zeatin 5'-phosphate + H2O = trans-zeatin + D-ribose 5-phosphate. In terms of biological role, cytokinin-activating enzyme working in the direct activation pathway. Phosphoribohydrolase that converts inactive cytokinin nucleotides to the biologically active free-base forms. The chain is Probable cytokinin riboside 5'-monophosphate phosphoribohydrolase LOGL2 (LOGL2) from Oryza sativa subsp. japonica (Rice).